Reading from the N-terminus, the 270-residue chain is Energy-coupling factor transporter ATP-binding protein EcfA (270 aa).

The ABC transporter domain maps to 5 to 238 (VEIENLTFFY…QLLEQNGLKA (234 aa)). Position 38-45 (38-45 (GHNGAGKS)) interacts with ATP.

It belongs to the ABC transporter superfamily. Energy-coupling factor EcfA family. As to quaternary structure, forms a stable energy-coupling factor (ECF) transporter complex composed of 2 membrane-embedded substrate-binding proteins (S component), 2 ATP-binding proteins (A component) and 2 transmembrane proteins (T component).

The protein resides in the cell membrane. Functionally, ATP-binding (A) component of a common energy-coupling factor (ECF) ABC-transporter complex. Unlike classic ABC transporters this ECF transporter provides the energy necessary to transport a number of different substrates. The chain is Energy-coupling factor transporter ATP-binding protein EcfA from Carboxydothermus hydrogenoformans (strain ATCC BAA-161 / DSM 6008 / Z-2901).